We begin with the raw amino-acid sequence, 303 residues long: tRNA pseudouridine synthase B (303 aa).

Residue Asp38 is the Nucleophile of the active site.

This sequence belongs to the pseudouridine synthase TruB family. Type 1 subfamily.

It carries out the reaction uridine(55) in tRNA = pseudouridine(55) in tRNA. Its function is as follows. Responsible for synthesis of pseudouridine from uracil-55 in the psi GC loop of transfer RNAs. In Levilactobacillus brevis (strain ATCC 367 / BCRC 12310 / CIP 105137 / JCM 1170 / LMG 11437 / NCIMB 947 / NCTC 947) (Lactobacillus brevis), this protein is tRNA pseudouridine synthase B.